A 117-amino-acid chain; its full sequence is Small ribosomal subunit protein uS13 (117 aa).

Positions 94–117 (SLPLRGQRTKTNARTRKGPRRLIK) are disordered.

It belongs to the universal ribosomal protein uS13 family. Part of the 30S ribosomal subunit. Forms a loose heterodimer with protein S19. Forms two bridges to the 50S subunit in the 70S ribosome.

Located at the top of the head of the 30S subunit, it contacts several helices of the 16S rRNA. In the 70S ribosome it contacts the 23S rRNA (bridge B1a) and protein L5 of the 50S subunit (bridge B1b), connecting the 2 subunits; these bridges are implicated in subunit movement. Contacts the tRNAs in the A and P-sites. This chain is Small ribosomal subunit protein uS13, found in Vesicomyosocius okutanii subsp. Calyptogena okutanii (strain HA).